Consider the following 784-residue polypeptide: Ubiquitin carboxyl-terminal hydrolase 1 (784 aa).

Disordered stretches follow at residues 1 to 21 (MPGV…SKKN) and 33 to 54 (TKRA…EYRG). Residues 7–16 (SESNGLSRGS) show a composition bias toward polar residues. Ser16, Ser42, and Ser67 each carry phosphoserine. The USP domain maps to 81–784 (VGLNNLGNTC…TPYLLFYKKL (704 aa)). Cys90 (nucleophile) is an active-site residue. Composition is skewed to basic and acidic residues over residues 232 to 243 (KVEEKSLQKEET) and 252 to 264 (DSTR…KEQL). Disordered stretches follow at residues 232-341 (KVEE…KINW) and 363-411 (TNQR…SSEA). Residues 389 to 407 (NTVNGSGPASPGSSVTPVD) show a composition bias toward polar residues. Ser475 is modified (phosphoserine). His593 (proton acceptor) is an active-site residue. The disordered stretch occupies residues 686-723 (PEKVVGTPFTDSRNSETNDTNGTQESDRSKESSDQTGI). A compositionally biased stretch (polar residues) spans 694–709 (FTDSRNSETNDTNGTQ). Ser767 carries the post-translational modification Phosphoserine.

Belongs to the peptidase C19 family. As to quaternary structure, interacts with FANCD2 and PCNA. Interacts with WDR48. Interacts with ATAD5; the interaction regulates USP1-mediated PCNA deubiquitination. In terms of processing, autocatalytic cleavage of USP1 following UV irradiation inactivates it, leading to an increase in ubiquitinated PCNA, recruitment of POLH and translesion synthesis. Ubiquitinated by the CRL2(KLHDC2) complex following autocatalytic cleavage, leading to its degradation: the CRL2(KLHDC2) complex recognizes the diglycine (Gly-Gly) at the C-terminus.

Its subcellular location is the nucleus. The catalysed reaction is Thiol-dependent hydrolysis of ester, thioester, amide, peptide and isopeptide bonds formed by the C-terminal Gly of ubiquitin (a 76-residue protein attached to proteins as an intracellular targeting signal).. Negative regulator of DNA damage repair which specifically deubiquitinates monoubiquitinated FANCD2. Also involved in PCNA-mediated translesion synthesis (TLS) by deubiquitinating monoubiquitinated PCNA. Has almost no deubiquitinating activity by itself and requires the interaction with WDR48 to have a high activity. This is Ubiquitin carboxyl-terminal hydrolase 1 from Rattus norvegicus (Rat).